The following is a 274-amino-acid chain: UPF0758 protein RHECIAT_CH0001935 (274 aa).

The tract at residues 1–57 (MAKRPAATSSNDELPFATEEPVADERSFFGGRPQNPTAPNARAALPASLSGPEHYHG) is disordered. The MPN domain maps to 152–274 (VLSSWSSVIQ…HVSLKGLKLI (123 aa)). 3 residues coordinate Zn(2+): H223, H225, and D236. The short motif at 223 to 236 (HNHPSGDPTPSRAD) is the JAMM motif element.

Belongs to the UPF0758 family.

This is UPF0758 protein RHECIAT_CH0001935 from Rhizobium etli (strain CIAT 652).